A 285-amino-acid polypeptide reads, in one-letter code: 4-diphosphocytidyl-2-C-methyl-D-erythritol kinase (285 aa).

Residue lysine 12 is part of the active site. 95 to 105 (PMGGGVGGGSS) contributes to the ATP binding site. Aspartate 137 is a catalytic residue.

It belongs to the GHMP kinase family. IspE subfamily.

It catalyses the reaction 4-CDP-2-C-methyl-D-erythritol + ATP = 4-CDP-2-C-methyl-D-erythritol 2-phosphate + ADP + H(+). It functions in the pathway isoprenoid biosynthesis; isopentenyl diphosphate biosynthesis via DXP pathway; isopentenyl diphosphate from 1-deoxy-D-xylulose 5-phosphate: step 3/6. Its function is as follows. Catalyzes the phosphorylation of the position 2 hydroxy group of 4-diphosphocytidyl-2C-methyl-D-erythritol. The sequence is that of 4-diphosphocytidyl-2-C-methyl-D-erythritol kinase from Actinobacillus pleuropneumoniae serotype 5b (strain L20).